Reading from the N-terminus, the 247-residue chain is Potassium channel Ftrac_2467 (247 aa).

A run of 6 helical transmembrane segments spans residues threonine 23 to serine 44, serine 56 to tyrosine 78, lysine 89 to serine 117, leucine 142 to tryptophan 165, serine 187 to tryptophan 210, and threonine 215 to threonine 237. A RxxxFSD motif motif is present at residues arginine 24 to aspartate 30.

The protein belongs to the TMEM175 family. As to quaternary structure, homotetramer.

It localises to the cell membrane. It catalyses the reaction K(+)(in) = K(+)(out). Potassium channel; forms a potassium-permeable leak-like channel with weak selectivity for potassium. The channel is permeable for K(+), Rb(+) and Cs(+). The protein is Potassium channel Ftrac_2467 of Marivirga tractuosa (strain ATCC 23168 / DSM 4126 / NBRC 15989 / NCIMB 1408 / VKM B-1430 / H-43) (Microscilla tractuosa).